The sequence spans 37 residues: Large ribosomal subunit protein bL36 (37 aa).

It belongs to the bacterial ribosomal protein bL36 family.

This Nocardia farcinica (strain IFM 10152) protein is Large ribosomal subunit protein bL36.